Here is a 392-residue protein sequence, read N- to C-terminus: Speckle-type POZ protein-like A (392 aa).

Residues 31 to 161 (KFSYMWTINN…DDKLTLFCEV (131 aa)) enclose the MATH domain. Positions 200–267 (TDCSLYVGGQ…IYTGKAPNLE (68 aa)) constitute a BTB domain.

The protein belongs to the Tdpoz family. Homodimer. Heterodimer with SPOP. Component of cullin-RING-based BCR (BTB-CUL3-RBX1) E3 ubiquitin-protein ligase complexes containing homodimeric SPOPL or the heterodimer formed by SPOP and SPOPL.

It is found in the nucleus. Its pathway is protein modification; protein ubiquitination. In terms of biological role, component of a cullin-RING-based BCR (BTB-CUL3-RBX1) E3 ubiquitin-protein ligase complex that mediates the ubiquitination and subsequent proteasomal degradation of target proteins, but with relatively low efficiency. This chain is Speckle-type POZ protein-like A (spopla), found in Danio rerio (Zebrafish).